The chain runs to 571 residues: Ubiquitin-like-specific protease 1C (571 aa).

The disordered stretch occupies residues 221–260 (SESKDPKGDRRPNEAYGKGKPNESSPYLLVDDDDGDDDKV). Residues 222 to 233 (ESKDPKGDRRPN) are compositionally biased toward basic and acidic residues. Active-site residues include H426, D449, and C512.

It belongs to the peptidase C48 family.

The protein localises to the nucleus. Its subcellular location is the nucleoplasm. Functionally, protease that catalyzes two essential functions in the SUMO pathway: processing of full-length SUMOs to their mature forms and deconjugation of SUMO from targeted proteins. Cleaves precursors of SUM1 and SUM2, but not of SUM3 or SUM5. Able to release SUM1 and SUM2 from conjugates, but unable to cleave SUM3. Protease activity mainly directed at deconjugating SUM1 and SUM2 from their target proteins. Regulates salt stress responses and flowering time. Redundant with ULP1D. This is Ubiquitin-like-specific protease 1C (ULP1C) from Arabidopsis thaliana (Mouse-ear cress).